Reading from the N-terminus, the 363-residue chain is tRNA/tmRNA (uracil-C(5))-methyltransferase (363 aa).

Residues Gln-187, Tyr-215, Asn-220, Glu-236, and Asp-296 each coordinate S-adenosyl-L-methionine. Cys-321 acts as the Nucleophile in catalysis. Glu-355 functions as the Proton acceptor in the catalytic mechanism.

Belongs to the class I-like SAM-binding methyltransferase superfamily. RNA M5U methyltransferase family. TrmA subfamily.

The enzyme catalyses uridine(54) in tRNA + S-adenosyl-L-methionine = 5-methyluridine(54) in tRNA + S-adenosyl-L-homocysteine + H(+). The catalysed reaction is uridine(341) in tmRNA + S-adenosyl-L-methionine = 5-methyluridine(341) in tmRNA + S-adenosyl-L-homocysteine + H(+). Dual-specificity methyltransferase that catalyzes the formation of 5-methyluridine at position 54 (m5U54) in all tRNAs, and that of position 341 (m5U341) in tmRNA (transfer-mRNA). The polypeptide is tRNA/tmRNA (uracil-C(5))-methyltransferase (Pseudomonas aeruginosa (strain UCBPP-PA14)).